Here is a 221-residue protein sequence, read N- to C-terminus: Lactate racemization regulatory protein (221 aa).

The 75-residue stretch at 139–213 folds into the HTH crp-type domain; the sequence is NGKKGAICAF…NHKFIIQDVS (75 aa). The segment at residues 172–192 is a DNA-binding region (H-T-H motif); the sequence is NDDIAGFCGISSRSSVNRMLK.

Multimerizes on DNA. Multimerization is required for transcription activation.

L-lactate acts as a positive effector on the binding and multimerization of LarR on DNA, while D-lactate antagonizes the positive effect of L-lactate. Its function is as follows. Positive transcriptional regulator that is absolutely required for the expression of lactate racemase (Lar) activity. Controls Lar expression by sensing the L-/D-lactate ration. Binds to a 16-bp palindromic sequence (Lar box motif) that is present in the larR-larA intergenic region, allowing transcription of the larABCDE operon. The polypeptide is Lactate racemization regulatory protein (Lactiplantibacillus plantarum (strain ATCC BAA-793 / NCIMB 8826 / WCFS1) (Lactobacillus plantarum)).